Consider the following 89-residue polypeptide: MYLGKVIGTVVSTSKNESLSGTKLLVVARLTEKLIPDGSTQVVVDTVGAGNGEIVIVSCGSSARQSTGKDHSVIDAAVVGIVDTVETVN.

A BMV domain is found at 1–83 (MYLGKVIGTV…IDAAVVGIVD (83 aa)).

The protein belongs to the CcmL/EutN family. Homopentamer with a small central pore.

The protein localises to the bacterial microcompartment. Probably forms vertices in the bacterial microcompartment (BMC) predicted to be involved in glycyl radical-based 1,2-propanediol metabolism in this organism. This chain is Bacterial microcompartment shell vertex protein GrpN, found in Rhodospirillum rubrum (strain F11).